The following is a 772-amino-acid chain: Acylamino-acid-releasing enzyme 2 (772 aa).

Active-site charge relay system residues include serine 617, aspartate 708, and histidine 740.

The protein belongs to the peptidase S9C family. Homotetramer.

The protein localises to the cytoplasm. It catalyses the reaction Cleavage of an N-acetyl or N-formyl amino acid from the N-terminus of a polypeptide.. Its function is as follows. Catalyzes the hydrolysis of the N-terminal peptide bond of an N-acetylated peptide to generate an N-acetylated amino acid and a peptide with a free N-terminus. The polypeptide is Acylamino-acid-releasing enzyme 2 (Oryza sativa subsp. japonica (Rice)).